The primary structure comprises 647 residues: Threonine--tRNA ligase (647 aa).

Residues 1–63 (MYMIQLTFPD…EHDGKIELVM (63 aa)) enclose the TGS domain. Positions 247-544 (DHRKLGKELD…LIEEYKGAFP (298 aa)) are catalytic. Residues C340, H391, and H521 each coordinate Zn(2+).

Belongs to the class-II aminoacyl-tRNA synthetase family. As to quaternary structure, homodimer. Zn(2+) serves as cofactor.

The protein resides in the cytoplasm. The enzyme catalyses tRNA(Thr) + L-threonine + ATP = L-threonyl-tRNA(Thr) + AMP + diphosphate + H(+). Functionally, catalyzes the attachment of threonine to tRNA(Thr) in a two-step reaction: L-threonine is first activated by ATP to form Thr-AMP and then transferred to the acceptor end of tRNA(Thr). Also edits incorrectly charged L-seryl-tRNA(Thr). The sequence is that of Threonine--tRNA ligase from Exiguobacterium sp. (strain ATCC BAA-1283 / AT1b).